We begin with the raw amino-acid sequence, 334 residues long: Glycerol-3-phosphate dehydrogenase [NAD(P)+] (334 aa).

NADPH contacts are provided by Ser14, Tyr15, His35, and Lys109. Sn-glycerol 3-phosphate is bound by residues Lys109, Gly138, and Thr140. Ala142 contributes to the NADPH binding site. 5 residues coordinate sn-glycerol 3-phosphate: Lys194, Asp247, Ser257, Arg258, and Asn259. Lys194 functions as the Proton acceptor in the catalytic mechanism. Position 258 (Arg258) interacts with NADPH. Val282 and Glu284 together coordinate NADPH.

This sequence belongs to the NAD-dependent glycerol-3-phosphate dehydrogenase family.

It localises to the cytoplasm. The catalysed reaction is sn-glycerol 3-phosphate + NAD(+) = dihydroxyacetone phosphate + NADH + H(+). It catalyses the reaction sn-glycerol 3-phosphate + NADP(+) = dihydroxyacetone phosphate + NADPH + H(+). The protein operates within membrane lipid metabolism; glycerophospholipid metabolism. Functionally, catalyzes the reduction of the glycolytic intermediate dihydroxyacetone phosphate (DHAP) to sn-glycerol 3-phosphate (G3P), the key precursor for phospholipid synthesis. The polypeptide is Glycerol-3-phosphate dehydrogenase [NAD(P)+] (Tolumonas auensis (strain DSM 9187 / NBRC 110442 / TA 4)).